A 520-amino-acid polypeptide reads, in one-letter code: GMP synthase [glutamine-hydrolyzing] (520 aa).

Residues 13 to 205 form the Glutamine amidotransferase type-1 domain; that stretch reads KIIVLDYGSQ…ALNICKAKGD (193 aa). The active-site Nucleophile is the Cys-90. Active-site residues include His-179 and Glu-181. Positions 206–395 constitute a GMPS ATP-PPase domain; the sequence is WSMDNFIDMQ…LGMPDHIVWR (190 aa). 233–239 contributes to the ATP binding site; the sequence is SGGVDSS.

As to quaternary structure, homodimer.

The catalysed reaction is XMP + L-glutamine + ATP + H2O = GMP + L-glutamate + AMP + diphosphate + 2 H(+). It functions in the pathway purine metabolism; GMP biosynthesis; GMP from XMP (L-Gln route): step 1/1. Catalyzes the synthesis of GMP from XMP. This chain is GMP synthase [glutamine-hydrolyzing], found in Streptococcus pneumoniae (strain CGSP14).